We begin with the raw amino-acid sequence, 68 residues long: uncharacterized protein (68 aa).

The next 2 membrane-spanning stretches (helical) occupy residues 1–21 and 28–48; these read MLFIPPPLLCLFIAIAMYFLP and VHFSVIVFVISLSFLIALSSV.

Its subcellular location is the cell membrane. This is an uncharacterized protein from Haemophilus influenzae (strain ATCC 51907 / DSM 11121 / KW20 / Rd).